Here is a 569-residue protein sequence, read N- to C-terminus: Proline--tRNA ligase (569 aa).

Belongs to the class-II aminoacyl-tRNA synthetase family. ProS type 1 subfamily. In terms of assembly, homodimer.

It localises to the cytoplasm. It carries out the reaction tRNA(Pro) + L-proline + ATP = L-prolyl-tRNA(Pro) + AMP + diphosphate. Functionally, catalyzes the attachment of proline to tRNA(Pro) in a two-step reaction: proline is first activated by ATP to form Pro-AMP and then transferred to the acceptor end of tRNA(Pro). As ProRS can inadvertently accommodate and process non-cognate amino acids such as alanine and cysteine, to avoid such errors it has two additional distinct editing activities against alanine. One activity is designated as 'pretransfer' editing and involves the tRNA(Pro)-independent hydrolysis of activated Ala-AMP. The other activity is designated 'posttransfer' editing and involves deacylation of mischarged Ala-tRNA(Pro). The misacylated Cys-tRNA(Pro) is not edited by ProRS. The protein is Proline--tRNA ligase of Latilactobacillus sakei subsp. sakei (strain 23K) (Lactobacillus sakei subsp. sakei).